The following is a 183-amino-acid chain: Ribulose bisphosphate carboxylase small subunit, chloroplastic (183 aa).

The N-terminal 58 residues, 1 to 58 (MASSMLSTAAVACINRASPAQASMVAPFTGLKSTSAFPTTRKTTTDITSIASNGGRVQ), are a transit peptide targeting the chloroplast.

Belongs to the RuBisCO small chain family. As to quaternary structure, heterohexadecamer of 8 large and 8 small subunits.

It localises to the plastid. The protein resides in the chloroplast. Its function is as follows. RuBisCO catalyzes two reactions: the carboxylation of D-ribulose 1,5-bisphosphate, the primary event in carbon dioxide fixation, as well as the oxidative fragmentation of the pentose substrate. Both reactions occur simultaneously and in competition at the same active site. Although the small subunit is not catalytic it is essential for maximal activity. The sequence is that of Ribulose bisphosphate carboxylase small subunit, chloroplastic from Hevea brasiliensis (Para rubber tree).